The sequence spans 318 residues: Ferredoxin--NADP reductase (318 aa).

FAD contacts are provided by Asp-33, Gln-41, Tyr-46, Val-84, Phe-115, Asp-276, and Thr-316.

Belongs to the ferredoxin--NADP reductase type 2 family. As to quaternary structure, homodimer. FAD serves as cofactor.

It carries out the reaction 2 reduced [2Fe-2S]-[ferredoxin] + NADP(+) + H(+) = 2 oxidized [2Fe-2S]-[ferredoxin] + NADPH. The chain is Ferredoxin--NADP reductase from Lactobacillus gasseri (strain ATCC 33323 / DSM 20243 / BCRC 14619 / CIP 102991 / JCM 1131 / KCTC 3163 / NCIMB 11718 / NCTC 13722 / AM63).